Consider the following 121-residue polypeptide: UPF0102 protein Hhal_2103 (121 aa).

The segment at 1–20 (MMAPQTTRNDPRQRGQEAEE) is disordered. Residues 9–20 (NDPRQRGQEAEE) show a composition bias toward basic and acidic residues.

This sequence belongs to the UPF0102 family.

This Halorhodospira halophila (strain DSM 244 / SL1) (Ectothiorhodospira halophila (strain DSM 244 / SL1)) protein is UPF0102 protein Hhal_2103.